Here is a 71-residue protein sequence, read N- to C-terminus: Sec-independent protein translocase protein TatA (71 aa).

Residues 1-21 (MGSFSMWHWLIVLAIVLLLFG) form a helical membrane-spanning segment. The interval 40-71 (KKGMSDDDTAPDGTPKPADQSKTVDHRADDHK) is disordered. Basic and acidic residues predominate over residues 61-71 (KTVDHRADDHK).

Belongs to the TatA/E family. In terms of assembly, the Tat system comprises two distinct complexes: a TatABC complex, containing multiple copies of TatA, TatB and TatC subunits, and a separate TatA complex, containing only TatA subunits. Substrates initially bind to the TatABC complex, which probably triggers association of the separate TatA complex to form the active translocon.

It localises to the cell inner membrane. Its function is as follows. Part of the twin-arginine translocation (Tat) system that transports large folded proteins containing a characteristic twin-arginine motif in their signal peptide across membranes. TatA could form the protein-conducting channel of the Tat system. In Allorhizobium ampelinum (strain ATCC BAA-846 / DSM 112012 / S4) (Agrobacterium vitis (strain S4)), this protein is Sec-independent protein translocase protein TatA.